A 101-amino-acid polypeptide reads, in one-letter code: Small ribosomal subunit protein uS14 (101 aa).

Residues 1-22 (MAKVSSIKKNESRKKKSQSLHN) form a disordered region. The segment covering 11-22 (ESRKKKSQSLHN) has biased composition (basic residues).

It belongs to the universal ribosomal protein uS14 family. Part of the 30S ribosomal subunit. Contacts proteins S3 and S10.

Functionally, binds 16S rRNA, required for the assembly of 30S particles and may also be responsible for determining the conformation of the 16S rRNA at the A site. This Rickettsia conorii (strain ATCC VR-613 / Malish 7) protein is Small ribosomal subunit protein uS14.